A 784-amino-acid polypeptide reads, in one-letter code: Probable leucine-rich repeat receptor-like protein kinase IMK3 (784 aa).

The N-terminal stretch at 1–48 (MEFITQNQAITSLSMINTDIDQPKASLRSRFLLHLIICLLFFVPPCSS) is a signal peptide. Residues 49–409 (QAWDGVVITQ…PSHRNLSTKD (361 aa)) are Extracellular-facing. The N-linked (GlcNAc...) asparagine glycan is linked to asparagine 82. LRR repeat units lie at residues 126–148 (ALRK…LGLI), 150–172 (NLRG…LGVS), 174–197 (FLQT…ADSS), 198–220 (KLLR…LSRS), 222–242 (SLQF…DTWG), 247–268 (NLRV…SLCN), 271–294 (QLQD…SKLT), 295–317 (KLRK…LGNI), 319–342 (SLIH…SDLE), and 343–365 (SLNF…LSQK). N-linked (GlcNAc...) asparagine glycans are attached at residues asparagine 203, asparagine 232, and asparagine 268. Asparagine 316 carries an N-linked (GlcNAc...) asparagine glycan. 4 N-linked (GlcNAc...) asparagine glycosylation sites follow: asparagine 348, asparagine 353, asparagine 367, and asparagine 404. The helical transmembrane segment at 410 to 430 (IILIASGALLIVMLILVCVLC) threads the bilayer. Over 431–784 (CLLRKKANET…VPEASASTSQ (354 aa)) the chain is Cytoplasmic. The tract at residues 441 to 467 (KAKGGEAGPGAVAAKTEKGGEAEAGGE) is disordered. One can recognise a Protein kinase domain in the interval 488–773 (CATAEIMGKS…TTATTSEPLI (286 aa)). ATP contacts are provided by residues 494-502 (MGKSTYGTV) and lysine 516. The segment at 760 to 784 (RPEETTATTSEPLIDVPEASASTSQ) is disordered.

Belongs to the protein kinase superfamily. Ser/Thr protein kinase family. In terms of assembly, interacts with AGL24. Post-translationally, autophosphorylated. In terms of tissue distribution, expressed in meristems, including roots, vegetative, inflorescence and floral meristems, and in embryos.

The protein localises to the cell membrane. The enzyme catalyses L-seryl-[protein] + ATP = O-phospho-L-seryl-[protein] + ADP + H(+). It catalyses the reaction L-threonyl-[protein] + ATP = O-phospho-L-threonyl-[protein] + ADP + H(+). In terms of biological role, can phosphorylate AGL24. This is Probable leucine-rich repeat receptor-like protein kinase IMK3 (IMK3) from Arabidopsis thaliana (Mouse-ear cress).